Consider the following 831-residue polypeptide: Prolactin receptor (831 aa).

Residues 1–23 form the signal peptide; that stretch reads MKQDLISSVQIILFLPLTTVGLA. The Extracellular segment spans residues 24-438; sequence GQSFPGKPKI…QIPNDFRVKD (415 aa). Fibronectin type-III domains are found at residues 30-128, 129-227, 230-331, and 332-433; these read KPKI…VQPG, SPVN…IPSG, PPEK…VQPD, and PPVN…IPND. An intrachain disulfide couples Cys36 to Cys46. Asn59 is a glycosylation site (N-linked (GlcNAc...) asparagine). Residues Cys75 and Cys86 are joined by a disulfide bond. N-linked (GlcNAc...) asparagine glycans are attached at residues Asn91, Asn100, Asn112, Asn132, Asn262, Asn303, Asn315, and Asn335. Residues Asp414 and His416 each coordinate Zn(2+). A WSXWS motif motif is present at residues 419–423; the sequence is WSEWS. The chain crosses the membrane as a helical span at residues 439 to 459; it reads MIVWIVLGVLSSLICLIMSWT. At 460-831 the chain is on the cytoplasmic side; the sequence is MVLKGYRMIT…DPSSFMPSFK (372 aa). The Box 1 motif motif lies at 471 to 479; it reads MLPPVPGPK. Disordered regions lie at residues 527–563, 774–796, and 808–831; these read QQLMPSHDNGHPSKNAKITRKETDSDSGRGSCDSPSL, RVPHTPASQEPAKETSQSLQQGQ, and PSDCKRETGGSEYMDPSSFMPSFK. Residues 787–796 are compositionally biased toward polar residues; that stretch reads ETSQSLQQGQ.

It belongs to the type I cytokine receptor family. Type 1 subfamily.

Its subcellular location is the membrane. This is a receptor for the anterior pituitary hormone prolactin. In Gallus gallus (Chicken), this protein is Prolactin receptor (PRLR).